The primary structure comprises 303 residues: Probable alpha-L-glutamate ligase (303 aa).

Residues 104-287 (LQLLAREGID…IAGMMIEFIE (184 aa)) form the ATP-grasp domain. Residues Lys141, 178–179 (EY), Asp187, and 211–213 (RSN) each bind ATP. Mg(2+) is bound by residues Asp248, Glu260, and Asn262. 3 residues coordinate Mn(2+): Asp248, Glu260, and Asn262.

This sequence belongs to the RimK family. Mg(2+) is required as a cofactor. It depends on Mn(2+) as a cofactor.

This is Probable alpha-L-glutamate ligase from Pectobacterium carotovorum subsp. carotovorum (strain PC1).